The sequence spans 209 residues: Thymidine kinase (209 aa).

ATP contacts are provided by residues 9–16 (AAMNAGKS) and 88–91 (DEAQ). Glutamate 89 (proton acceptor) is an active-site residue. Zn(2+) is bound by residues cysteine 146, cysteine 148, cysteine 183, and histidine 186.

This sequence belongs to the thymidine kinase family. As to quaternary structure, homotetramer.

It localises to the cytoplasm. The enzyme catalyses thymidine + ATP = dTMP + ADP + H(+). The protein is Thymidine kinase of Legionella pneumophila (strain Paris).